We begin with the raw amino-acid sequence, 315 residues long: uncharacterized protein (315 aa).

Coiled coils occupy residues 184 to 212 (AGEEDKKVMEELKEREKQLREDVSKTPEQ) and 238 to 275 (EEHRKKLHDVKKVILQAELEADSLEKTNPEVINQYKEK).

This sequence belongs to the IIV-6 287R family.

This is an uncharacterized protein from Acheta domesticus (House cricket).